Here is a 402-residue protein sequence, read N- to C-terminus: Sulfate adenylyltransferase (402 aa).

Belongs to the sulfate adenylyltransferase family.

The enzyme catalyses sulfate + ATP + H(+) = adenosine 5'-phosphosulfate + diphosphate. The protein operates within sulfur metabolism; hydrogen sulfide biosynthesis; sulfite from sulfate: step 1/3. The polypeptide is Sulfate adenylyltransferase (Vesicomyosocius okutanii subsp. Calyptogena okutanii (strain HA)).